The sequence spans 987 residues: Pro-apoptotic serine protease NMA111 (987 aa).

Residues 1-29 are disordered; that stretch reads MPDIPTKRRLSNGSVIDNTNKRQMQSSFV. A compositionally biased stretch (polar residues) spans 11–28; the sequence is SNGSVIDNTNKRQMQSSF. The tract at residues 69 to 262 is serine protease; that stretch reads VKSVVSIQFT…LPVYRPLRAL (194 aa). Residues H110, D141, and S224 each act as charge relay system in the active site. PDZ domains lie at 279 to 364 and 878 to 950; these read EWSL…VVIQ and PHHG…VSFD.

It belongs to the peptidase S1C family.

Its subcellular location is the nucleus. Its function is as follows. Nuclear serine protease which mediates apoptosis. The sequence is that of Pro-apoptotic serine protease NMA111 (NMA111) from Debaryomyces hansenii (strain ATCC 36239 / CBS 767 / BCRC 21394 / JCM 1990 / NBRC 0083 / IGC 2968) (Yeast).